The primary structure comprises 74 residues: UPF0291 protein EF_0064 (74 aa).

Positions Tyr53 to Asp74 are disordered. A compositionally biased stretch (basic and acidic residues) spans Thr61 to Asp74.

Belongs to the UPF0291 family.

It localises to the cytoplasm. This chain is UPF0291 protein EF_0064, found in Enterococcus faecalis (strain ATCC 700802 / V583).